Reading from the N-terminus, the 156-residue chain is NAD(P)H-quinone oxidoreductase subunit N (156 aa).

Belongs to the complex I NdhN subunit family. In terms of assembly, NDH-1 can be composed of about 15 different subunits; different subcomplexes with different compositions have been identified which probably have different functions.

It localises to the cellular thylakoid membrane. It catalyses the reaction a plastoquinone + NADH + (n+1) H(+)(in) = a plastoquinol + NAD(+) + n H(+)(out). It carries out the reaction a plastoquinone + NADPH + (n+1) H(+)(in) = a plastoquinol + NADP(+) + n H(+)(out). NDH-1 shuttles electrons from an unknown electron donor, via FMN and iron-sulfur (Fe-S) centers, to quinones in the respiratory and/or the photosynthetic chain. The immediate electron acceptor for the enzyme in this species is believed to be plastoquinone. Couples the redox reaction to proton translocation, and thus conserves the redox energy in a proton gradient. Cyanobacterial NDH-1 also plays a role in inorganic carbon-concentration. The chain is NAD(P)H-quinone oxidoreductase subunit N from Prochlorococcus marinus subsp. pastoris (strain CCMP1986 / NIES-2087 / MED4).